Consider the following 196-residue polypeptide: Phosphoheptose isomerase (196 aa).

Residues 34–193 (LIETFKIGNK…EQGLFGIFAG (160 aa)) form the SIS domain. 49 to 51 (NGG) lines the substrate pocket. Zn(2+) is bound by residues H58 and E62. Substrate is bound by residues E62, 91–92 (ND), 117–119 (STS), S122, and Q169. Zn(2+)-binding residues include Q169 and H177.

Belongs to the SIS family. GmhA subfamily. Homotetramer. It depends on Zn(2+) as a cofactor.

It localises to the cytoplasm. It carries out the reaction 2 D-sedoheptulose 7-phosphate = D-glycero-alpha-D-manno-heptose 7-phosphate + D-glycero-beta-D-manno-heptose 7-phosphate. Its pathway is carbohydrate biosynthesis; D-glycero-D-manno-heptose 7-phosphate biosynthesis; D-glycero-alpha-D-manno-heptose 7-phosphate and D-glycero-beta-D-manno-heptose 7-phosphate from sedoheptulose 7-phosphate: step 1/1. Functionally, catalyzes the isomerization of sedoheptulose 7-phosphate in D-glycero-D-manno-heptose 7-phosphate. The sequence is that of Phosphoheptose isomerase from Trichlorobacter lovleyi (strain ATCC BAA-1151 / DSM 17278 / SZ) (Geobacter lovleyi).